The primary structure comprises 161 residues: Xanthine-guanine phosphoribosyltransferase (161 aa).

5-phospho-alpha-D-ribose 1-diphosphate contacts are provided by residues Arg-41 to Gly-42 and Asp-95 to Thr-103. Mg(2+) is bound at residue Asp-96. 2 residues coordinate guanine: Asp-99 and Ile-142. Residues Asp-99 and Ile-142 each contribute to the xanthine site. GMP is bound by residues Asp-99–Thr-103 and Trp-141–Ile-142.

This sequence belongs to the purine/pyrimidine phosphoribosyltransferase family. XGPT subfamily. Homotetramer. Mg(2+) serves as cofactor.

It is found in the cell inner membrane. It carries out the reaction GMP + diphosphate = guanine + 5-phospho-alpha-D-ribose 1-diphosphate. The catalysed reaction is XMP + diphosphate = xanthine + 5-phospho-alpha-D-ribose 1-diphosphate. It catalyses the reaction IMP + diphosphate = hypoxanthine + 5-phospho-alpha-D-ribose 1-diphosphate. The protein operates within purine metabolism; GMP biosynthesis via salvage pathway; GMP from guanine: step 1/1. It participates in purine metabolism; XMP biosynthesis via salvage pathway; XMP from xanthine: step 1/1. Purine salvage pathway enzyme that catalyzes the transfer of the ribosyl-5-phosphate group from 5-phospho-alpha-D-ribose 1-diphosphate (PRPP) to the N9 position of the 6-oxopurines guanine and xanthine to form the corresponding ribonucleotides GMP (guanosine 5'-monophosphate) and XMP (xanthosine 5'-monophosphate), with the release of PPi. To a lesser extent, also acts on hypoxanthine. The sequence is that of Xanthine-guanine phosphoribosyltransferase from Idiomarina loihiensis (strain ATCC BAA-735 / DSM 15497 / L2-TR).